The sequence spans 324 residues: tRNA U34 carboxymethyltransferase (324 aa).

Carboxy-S-adenosyl-L-methionine is bound by residues Lys92, Trp106, Lys111, Gly131, 181-182 (LE), Met197, Tyr201, and Arg316.

The protein belongs to the class I-like SAM-binding methyltransferase superfamily. CmoB family. Homotetramer.

The enzyme catalyses carboxy-S-adenosyl-L-methionine + 5-hydroxyuridine(34) in tRNA = 5-carboxymethoxyuridine(34) in tRNA + S-adenosyl-L-homocysteine + H(+). Catalyzes carboxymethyl transfer from carboxy-S-adenosyl-L-methionine (Cx-SAM) to 5-hydroxyuridine (ho5U) to form 5-carboxymethoxyuridine (cmo5U) at position 34 in tRNAs. In Syntrophotalea carbinolica (strain DSM 2380 / NBRC 103641 / GraBd1) (Pelobacter carbinolicus), this protein is tRNA U34 carboxymethyltransferase.